The primary structure comprises 479 residues: Long-chain acyl-protein thioester reductase (479 aa).

Belongs to the LuxC family.

It catalyses the reaction a long-chain fatty aldehyde + NADP(+) + CoA = a long-chain fatty acyl-CoA + NADPH + H(+). It functions in the pathway lipid metabolism; fatty acid reduction for biolumincescence. In terms of biological role, luxC is the fatty acid reductase enzyme responsible for synthesis of the aldehyde substrate for the luminescent reaction catalyzed by luciferase. In Aliivibrio fischeri (Vibrio fischeri), this protein is Long-chain acyl-protein thioester reductase (luxC).